The following is a 766-amino-acid chain: Protein zer-1 homolog (766 aa).

Residue A2 is modified to N-acetylalanine. 3 LRR repeats span residues 226 to 245, 246 to 268, and 278 to 302; these read SLVL…IVQL, HKLR…KLTR, and LGNL…KMEE. ARM repeat units lie at residues 427 to 467, 511 to 556, 558 to 600, 602 to 643, and 714 to 756; these read RSEQ…NFGI, DNDH…NITD, TPDN…NVAE, KELR…HIMF, and PDKY…HCSN.

This sequence belongs to the zyg-11 family. Interacts with the ELOC-ELOB/Elongin BC complex. Part of an E3 ubiquitin ligase complex including ZER1, CUL2 and Elongin BC.

Its function is as follows. Serves as substrate adapter subunit in the E3 ubiquitin ligase complex ZYG11B-CUL2-Elongin BC. Acts redudantly with ZYG11B to target substrates bearing N-terminal glycine degrons for proteasomal degradation. Involved in the clearance of proteolytic fragments generated by caspase cleavage during apoptosis since N-terminal glycine degrons are strongly enriched at caspase cleavage sites. Also important in the quality control of protein N-myristoylation in which N-terminal glycine degrons are conditionally exposed after a failure of N-myristoylation. The sequence is that of Protein zer-1 homolog (ZER1) from Pongo abelii (Sumatran orangutan).